Here is a 179-residue protein sequence, read N- to C-terminus: Replication restart protein DnaT (179 aa).

The segment at 156–179 (GGLPKRDVNTVSEPDSQIPPGFRG) is disordered.

Belongs to the DnaT family. Homooligomerizes. Interacts with PriB. Component of the replication restart primosome. Primosome assembly occurs via a 'hand-off' mechanism. PriA binds to replication forks, subsequently PriB then DnaT bind; DnaT then displaces ssDNA to generate the helicase loading substrate.

Its function is as follows. Involved in the restart of stalled replication forks, which reloads the replicative helicase on sites other than the origin of replication. Can function in multiple replication restart pathways. Displaces ssDNA from a PriB-ssDNA complex. Probably forms a spiral filament on ssDNA. This Shigella boydii serotype 18 (strain CDC 3083-94 / BS512) protein is Replication restart protein DnaT.